The chain runs to 515 residues: Tetratricopeptide repeat protein 8 (515 aa).

A TPR 1 repeat occupies 4-37; sequence EMEPLLRAWSYFRRRKFQLCADLCTQMLEKSPYD. Disordered regions lie at residues 89–109 and 118–137; these read RPGT…TQAV and PITG…TMEQ. TPR repeat units follow at residues 225–258, 259–291, 292–325, 326–359, 360–393, 397–430, and 432–464; these read WWWK…QEMV, DTFL…FPGE, VTLL…DNTH, VEAI…GVYN, CQLF…AENE, ADVW…NNHH, and EAYN…APHM.

Part of BBSome complex, that contains BBS1, BBS2, BBS4, BBS5, BBS7, BBS8/TTC8, BBS9 and BBIP10. Interacts with PCM1. Interacts with CCDC28B. Interacts with PKD1. In terms of tissue distribution, isoform 1 is retina-specific whereas isoform 2 is ubiquitously expressed.

It is found in the cytoplasm. The protein localises to the cytoskeleton. Its subcellular location is the microtubule organizing center. The protein resides in the centrosome. It localises to the centriole. It is found in the cell projection. The protein localises to the cilium membrane. Its subcellular location is the centriolar satellite. The protein resides in the cilium. Functionally, the BBSome complex is thought to function as a coat complex required for sorting of specific membrane proteins to the primary cilia. The BBSome complex is required for ciliogenesis but is dispensable for centriolar satellite function. This ciliogenic function is mediated in part by the Rab8 GDP/GTP exchange factor, which localizes to the basal body and contacts the BBSome. Rab8(GTP) enters the primary cilium and promotes extension of the ciliary membrane. Firstly the BBSome associates with the ciliary membrane and binds to RAB3IP/Rabin8, the guanosyl exchange factor (GEF) for Rab8 and then the Rab8-GTP localizes to the cilium and promotes docking and fusion of carrier vesicles to the base of the ciliary membrane. The BBSome complex, together with the LTZL1, controls SMO ciliary trafficking and contributes to the sonic hedgehog (SHH) pathway regulation. Required for proper BBSome complex assembly and its ciliary localization. This is Tetratricopeptide repeat protein 8 (Ttc8) from Mus musculus (Mouse).